The sequence spans 498 residues: MNKGYVLALDQGTTSSRAILFNRDGRLVGQVNHEFRQIYPQPGWVEHDPREIWSTQLRAVQDVLARTGVRLSEVAAIGITNQRETTVVWDAETGEPVYNAIVWQCRRTAPICAELAARGWAPRIREKTGLVIDAYFSGTKVKWILDNVPGVREKAEQGRLRFGTIDAWLIWNLTGGRVHATDYSNASRTMLFNIHQLAWDEEILHELGIPASLLPRALPSSHVYGETDPAVLGAAIPIAGVAGDQQAALFGQACFQPGDAKNTYGTGCFMLMNTGDRAVPSESGLLTTIAWGIGDRVEYALEGSIFIGGAAVQWLRDELRFFDRAADSEALALSVPDSGGVYVVPAFVGLGAPYWDMYARGIVVGLTRGTGRAHITRATLESIAYQTRDVLGAMEKDSGIRLNRLKVDGGAVANNFLMQFQSDILGVPVERPKIAETTALGAAYLAGLATGFWRSQAELADKWALDRGFTPALPAEERERLYAGWRRAVERARGWAAE.

Residue T13 coordinates ADP. The ATP site is built by T13, T14, and S15. T13 contacts sn-glycerol 3-phosphate. ADP is bound at residue R17. 4 residues coordinate sn-glycerol 3-phosphate: R83, E84, Y135, and D244. Residues R83, E84, Y135, D244, and Q245 each contribute to the glycerol site. Residues T266 and G309 each coordinate ADP. ATP is bound by residues T266, G309, Q313, and G410. ADP is bound by residues G410 and N414.

This sequence belongs to the FGGY kinase family. As to quaternary structure, homotetramer and homodimer (in equilibrium).

The catalysed reaction is glycerol + ATP = sn-glycerol 3-phosphate + ADP + H(+). Its pathway is polyol metabolism; glycerol degradation via glycerol kinase pathway; sn-glycerol 3-phosphate from glycerol: step 1/1. With respect to regulation, activated by phosphorylation and inhibited by fructose 1,6-bisphosphate (FBP). Functionally, key enzyme in the regulation of glycerol uptake and metabolism. Catalyzes the phosphorylation of glycerol to yield sn-glycerol 3-phosphate. The protein is Glycerol kinase of Symbiobacterium thermophilum (strain DSM 24528 / JCM 14929 / IAM 14863 / T).